Consider the following 788-residue polypeptide: Glucan 1,3-beta-glucosidase (788 aa).

The N-terminal stretch at 1–42 (MRFSSLLACLGAVGIQAAAIPFQRRVDNTTDSGSLDAAQAAA) is a signal peptide. Residues N28, N233, N381, and N773 are each glycosylated (N-linked (GlcNAc...) asparagine).

It belongs to the glycosyl hydrolase 55 family.

It catalyses the reaction Successive hydrolysis of beta-D-glucose units from the non-reducing ends of (1-&gt;3)-beta-D-glucans, releasing alpha-glucose.. In Cochliobolus carbonum (Maize leaf spot fungus), this protein is Glucan 1,3-beta-glucosidase (EXG1).